The following is a 430-amino-acid chain: Enolase (430 aa).

Gln-168 is a binding site for (2R)-2-phosphoglycerate. Glu-210 (proton donor) is an active-site residue. Asp-247, Glu-288, and Asp-315 together coordinate Mg(2+). Residues Lys-340, Arg-369, Ser-370, and Lys-391 each contribute to the (2R)-2-phosphoglycerate site. Lys-340 (proton acceptor) is an active-site residue.

This sequence belongs to the enolase family. Requires Mg(2+) as cofactor.

The protein localises to the cytoplasm. The protein resides in the secreted. Its subcellular location is the cell surface. The enzyme catalyses (2R)-2-phosphoglycerate = phosphoenolpyruvate + H2O. It participates in carbohydrate degradation; glycolysis; pyruvate from D-glyceraldehyde 3-phosphate: step 4/5. Its function is as follows. Catalyzes the reversible conversion of 2-phosphoglycerate (2-PG) into phosphoenolpyruvate (PEP). It is essential for the degradation of carbohydrates via glycolysis. The protein is Enolase of Picosynechococcus sp. (strain ATCC 27264 / PCC 7002 / PR-6) (Agmenellum quadruplicatum).